A 436-amino-acid polypeptide reads, in one-letter code: GTPase Der (436 aa).

EngA-type G domains follow at residues Pro-4 to Gly-167 and Ile-176 to Ala-351. Residues Gly-10 to Ser-17, Asp-57 to Ile-61, Asn-119 to Asp-122, Gly-182 to Ser-189, Asp-229 to Met-233, and Asn-294 to Asp-297 each bind GTP. Residues Met-352 to Lys-436 form the KH-like domain.

This sequence belongs to the TRAFAC class TrmE-Era-EngA-EngB-Septin-like GTPase superfamily. EngA (Der) GTPase family. In terms of assembly, associates with the 50S ribosomal subunit.

In terms of biological role, GTPase that plays an essential role in the late steps of ribosome biogenesis. This Geobacillus sp. (strain WCH70) protein is GTPase Der.